The chain runs to 364 residues: Phosphoserine aminotransferase (364 aa).

An L-glutamate-binding site is contributed by R46. Residues A80–R81, W106, T157, D176, and Q199 contribute to the pyridoxal 5'-phosphate site. Position 200 is an N6-(pyridoxal phosphate)lysine (K200). N241 to T242 is a binding site for pyridoxal 5'-phosphate.

It belongs to the class-V pyridoxal-phosphate-dependent aminotransferase family. SerC subfamily. In terms of assembly, homodimer. Requires pyridoxal 5'-phosphate as cofactor.

The protein resides in the cytoplasm. It carries out the reaction O-phospho-L-serine + 2-oxoglutarate = 3-phosphooxypyruvate + L-glutamate. The enzyme catalyses 4-(phosphooxy)-L-threonine + 2-oxoglutarate = (R)-3-hydroxy-2-oxo-4-phosphooxybutanoate + L-glutamate. The protein operates within amino-acid biosynthesis; L-serine biosynthesis; L-serine from 3-phospho-D-glycerate: step 2/3. Its pathway is cofactor biosynthesis; pyridoxine 5'-phosphate biosynthesis; pyridoxine 5'-phosphate from D-erythrose 4-phosphate: step 3/5. Its function is as follows. Catalyzes the reversible conversion of 3-phosphohydroxypyruvate to phosphoserine and of 3-hydroxy-2-oxo-4-phosphonooxybutanoate to phosphohydroxythreonine. The polypeptide is Phosphoserine aminotransferase (Vibrio vulnificus (strain YJ016)).